Here is a 130-residue protein sequence, read N- to C-terminus: Anti-adapter protein IraD (130 aa).

This sequence belongs to the GpW/Gp25 family. IraD subfamily. As to quaternary structure, interacts with RssB.

Its subcellular location is the cytoplasm. In terms of biological role, inhibits RpoS proteolysis by regulating RssB activity, thereby increasing the stability of the sigma stress factor RpoS during oxidative stress. Its effect on RpoS stability is due to its interaction with RssB, which probably blocks the interaction of RssB with RpoS, and the consequent delivery of the RssB-RpoS complex to the ClpXP protein degradation pathway. This Shigella boydii serotype 4 (strain Sb227) protein is Anti-adapter protein IraD.